Reading from the N-terminus, the 331-residue chain is Thiamine thiazole synthase (331 aa).

Substrate is bound by residues cysteine 86, 107–108 (EA), glycine 115, and valine 183. Cysteine 220 carries the 2,3-didehydroalanine (Cys) modification. Residues aspartate 222, histidine 237, methionine 289, and 299–301 (RMG) contribute to the substrate site.

This sequence belongs to the THI4 family. In terms of assembly, homooctamer. Fe cation serves as cofactor. Post-translationally, during the catalytic reaction, a sulfide is transferred from Cys-220 to a reaction intermediate, generating a dehydroalanine residue.

It is found in the cytoplasm. It localises to the nucleus. The catalysed reaction is [ADP-thiazole synthase]-L-cysteine + glycine + NAD(+) = [ADP-thiazole synthase]-dehydroalanine + ADP-5-ethyl-4-methylthiazole-2-carboxylate + nicotinamide + 3 H2O + 2 H(+). Involved in biosynthesis of the thiamine precursor thiazole. Catalyzes the conversion of NAD and glycine to adenosine diphosphate 5-(2-hydroxyethyl)-4-methylthiazole-2-carboxylic acid (ADT), an adenylated thiazole intermediate. The reaction includes an iron-dependent sulfide transfer from a conserved cysteine residue of the protein to a thiazole intermediate. The enzyme can only undergo a single turnover, which suggests it is a suicide enzyme. May have additional roles in adaptation to various stress conditions and in DNA damage tolerance. The polypeptide is Thiamine thiazole synthase (Emericella nidulans (strain FGSC A4 / ATCC 38163 / CBS 112.46 / NRRL 194 / M139) (Aspergillus nidulans)).